The sequence spans 135 residues: Small ribosomal subunit protein bS16m/bS16c (135 aa).

A chloroplast and mitochondrion-targeting transit peptide spans 1 to 7 (MVVRIRL). Positions 87–135 (PMVAMGRKGGARDTRPVDPMTGRYVDAENKTVNANDNQPKEEDTEAKSA) are disordered. The segment covering 124–135 (QPKEEDTEAKSA) has biased composition (basic and acidic residues).

It belongs to the bacterial ribosomal protein bS16 family. As to quaternary structure, component of the mitochondrial ribosome small subunit. As to expression, expressed at low levels in flowers, and, to a lower extent, in leaves, stems and roots.

Its subcellular location is the mitochondrion. The protein resides in the plastid. It localises to the chloroplast. The polypeptide is Small ribosomal subunit protein bS16m/bS16c (Arabidopsis thaliana (Mouse-ear cress)).